The primary structure comprises 405 residues: Elongation factor Tu (405 aa).

The tr-type G domain maps to 10 to 215; that stretch reads KPHVNVGTIG…AVDSYIPTPE (206 aa). The segment at 19–26 is G1; it reads GHVDHGKT. Position 19–26 (19–26) interacts with GTP; sequence GHVDHGKT. T26 serves as a coordination point for Mg(2+). Positions 61–65 are G2; that stretch reads GITIN. Residues 82-85 form a G3 region; sequence DCPG. GTP contacts are provided by residues 82-86 and 137-140; these read DCPGH and NKVD. Residues 137–140 are G4; that stretch reads NKVD. Residues 175–177 form a G5 region; it reads SAL.

This sequence belongs to the TRAFAC class translation factor GTPase superfamily. Classic translation factor GTPase family. EF-Tu/EF-1A subfamily. As to quaternary structure, monomer.

The protein resides in the cytoplasm. The enzyme catalyses GTP + H2O = GDP + phosphate + H(+). Its function is as follows. GTP hydrolase that promotes the GTP-dependent binding of aminoacyl-tRNA to the A-site of ribosomes during protein biosynthesis. The sequence is that of Elongation factor Tu from Deinonema sp.